Consider the following 406-residue polypeptide: UPF0754 membrane protein CYB_2931 (406 aa).

2 consecutive transmembrane segments (helical) span residues 1 to 21 (MAFWIYVVPPLAGLVIGYFTN) and 385 to 405 (IVNLGGLLGFLVGCVQVLFLL).

This sequence belongs to the UPF0754 family.

It is found in the cell inner membrane. The protein is UPF0754 membrane protein CYB_2931 of Synechococcus sp. (strain JA-2-3B'a(2-13)) (Cyanobacteria bacterium Yellowstone B-Prime).